We begin with the raw amino-acid sequence, 175 residues long: Phosphopantetheine adenylyltransferase (175 aa).

A substrate-binding site is contributed by S10. Residues 10–11 and H18 each bind ATP; that span reads SF. The substrate site is built by K42, L74, and R88. Residues 89 to 91, E99, and 124 to 130 each bind ATP; these read GMR and WIFTSSS.

Belongs to the bacterial CoaD family. Homohexamer. The cofactor is Mg(2+).

It is found in the cytoplasm. The catalysed reaction is (R)-4'-phosphopantetheine + ATP + H(+) = 3'-dephospho-CoA + diphosphate. It functions in the pathway cofactor biosynthesis; coenzyme A biosynthesis; CoA from (R)-pantothenate: step 4/5. In terms of biological role, reversibly transfers an adenylyl group from ATP to 4'-phosphopantetheine, yielding dephospho-CoA (dPCoA) and pyrophosphate. This chain is Phosphopantetheine adenylyltransferase, found in Desulfatibacillum aliphaticivorans.